Here is a 223-residue protein sequence, read N- to C-terminus: MENNIAKMIDHTLLKADATKAQIVKLCEEAKQYGFASVCVNPTWVATAAELLKGTDVKVCTVIGFPLGANTPETKAFETKNAIENGAAEVDMVINVGALKDGNDDLVERDIRAVVDVAKGKALVKVIIEACLLTEEEKVRACQLAVKAGADYVKTSTGFSTGGATPEDVALMRKTVGPNIGVKASGGVRDMQSAEAMIQAGATRIGTSSGVSIVEGKTANSNY.

The active-site Proton donor/acceptor is the D91. The Schiff-base intermediate with acetaldehyde role is filled by K154. K183 serves as the catalytic Proton donor/acceptor.

Belongs to the DeoC/FbaB aldolase family. DeoC type 1 subfamily.

The protein resides in the cytoplasm. It catalyses the reaction 2-deoxy-D-ribose 5-phosphate = D-glyceraldehyde 3-phosphate + acetaldehyde. It participates in carbohydrate degradation; 2-deoxy-D-ribose 1-phosphate degradation; D-glyceraldehyde 3-phosphate and acetaldehyde from 2-deoxy-alpha-D-ribose 1-phosphate: step 2/2. In terms of biological role, catalyzes a reversible aldol reaction between acetaldehyde and D-glyceraldehyde 3-phosphate to generate 2-deoxy-D-ribose 5-phosphate. This Geobacillus sp. (strain WCH70) protein is Deoxyribose-phosphate aldolase.